A 103-amino-acid chain; its full sequence is Pyrimidine/purine nucleoside phosphorylase (103 aa).

It belongs to the nucleoside phosphorylase PpnP family.

It catalyses the reaction a purine D-ribonucleoside + phosphate = a purine nucleobase + alpha-D-ribose 1-phosphate. It carries out the reaction adenosine + phosphate = alpha-D-ribose 1-phosphate + adenine. The catalysed reaction is cytidine + phosphate = cytosine + alpha-D-ribose 1-phosphate. The enzyme catalyses guanosine + phosphate = alpha-D-ribose 1-phosphate + guanine. It catalyses the reaction inosine + phosphate = alpha-D-ribose 1-phosphate + hypoxanthine. It carries out the reaction thymidine + phosphate = 2-deoxy-alpha-D-ribose 1-phosphate + thymine. The catalysed reaction is uridine + phosphate = alpha-D-ribose 1-phosphate + uracil. The enzyme catalyses xanthosine + phosphate = alpha-D-ribose 1-phosphate + xanthine. Functionally, catalyzes the phosphorolysis of diverse nucleosides, yielding D-ribose 1-phosphate and the respective free bases. Can use uridine, adenosine, guanosine, cytidine, thymidine, inosine and xanthosine as substrates. Also catalyzes the reverse reactions. This chain is Pyrimidine/purine nucleoside phosphorylase, found in Shewanella sp. (strain ANA-3).